Reading from the N-terminus, the 510-residue chain is Chromosomal replication initiator protein DnaA (510 aa).

The segment at 1–74 (MHTDLWERGC…EATLSELAGK (74 aa)) is domain I, interacts with DnaA modulators. Residues 74-173 (KPVRLELSLL…PTLSPAVSRG (100 aa)) form a domain II region. The disordered stretch occupies residues 125–168 (ARHDPQSVVPTPGGSANGRAAPRVGEPGGPVGTSTLPVAPTLSP). Positions 174–390 (RLNPALTFDT…GALRKVLAYS (217 aa)) are domain III, AAA+ region. Positions 218, 220, 221, and 222 each coordinate ATP. Residues 391–510 (RFSHKEISIN…LHVLEQTLKG (120 aa)) are domain IV, binds dsDNA.

Belongs to the DnaA family. In terms of assembly, oligomerizes as a right-handed, spiral filament on DNA at oriC.

It localises to the cytoplasm. Plays an essential role in the initiation and regulation of chromosomal replication. ATP-DnaA binds to the origin of replication (oriC) to initiate formation of the DNA replication initiation complex once per cell cycle. Binds the DnaA box (a 9 base pair repeat at the origin) and separates the double-stranded (ds)DNA. Forms a right-handed helical filament on oriC DNA; dsDNA binds to the exterior of the filament while single-stranded (ss)DNA is stabiized in the filament's interior. The ATP-DnaA-oriC complex binds and stabilizes one strand of the AT-rich DNA unwinding element (DUE), permitting loading of DNA polymerase. After initiation quickly degrades to an ADP-DnaA complex that is not apt for DNA replication. Binds acidic phospholipids. This is Chromosomal replication initiator protein DnaA from Leptothrix cholodnii (strain ATCC 51168 / LMG 8142 / SP-6) (Leptothrix discophora (strain SP-6)).